The sequence spans 326 residues: Macrosialin (326 aa).

The signal sequence occupies residues Met-1 to Glu-20. The tract at residues Asp-21–Gly-109 is mucin-like. Topologically, residues Asp-21–Ser-291 are extracellular. The span at Pro-38–His-58 shows a compositional bias: low complexity. The disordered stretch occupies residues Pro-38–Asn-129. 4 tandem repeats follow at residues Thr-44–Thr-49, Ser-50–His-64, Thr-65–Val-72, and Thr-73–Ser-88. Positions Gly-59 to Pro-69 are enriched in polar residues. Asn-60 is a glycosylation site (N-linked (GlcNAc...) asparagine). The span at Thr-70–Thr-80 shows a compositional bias: low complexity. A compositionally biased stretch (polar residues) spans Ser-81 to Val-108. N-linked (GlcNAc...) asparagine glycosylation is found at Asn-84 and Asn-97. The segment covering His-111–Ser-120 has biased composition (pro residues). Residues Asn-129, Asn-134, Asn-169, Asn-218, Asn-233, and Asn-251 are each glycosylated (N-linked (GlcNAc...) asparagine). Cysteines 139 and 177 form a disulfide. A disulfide bridge links Cys-249 with Cys-286. Residues Leu-292–Thr-316 form a helical membrane-spanning segment. The Cytoplasmic portion of the chain corresponds to Arg-317–Leu-326.

The protein belongs to the LAMP family. In terms of processing, N- and O-glycosylated. Expressed in tissue macrophages and to a lesser extent in dendritic cells.

Its subcellular location is the endosome membrane. The protein resides in the lysosome membrane. It localises to the cell membrane. In terms of biological role, could play a role in phagocytic activities of tissue macrophages, both in intracellular lysosomal metabolism and extracellular cell-cell and cell-pathogen interactions. Binds to tissue- and organ-specific lectins or selectins, allowing homing of macrophage subsets to particular sites. Rapid recirculation of CD68 from endosomes and lysosomes to the plasma membrane may allow macrophages to crawl over selectin-bearing substrates or other cells. The sequence is that of Macrosialin (Cd68) from Mus musculus (Mouse).